Here is an 82-residue protein sequence, read N- to C-terminus: Acyl carrier protein (82 aa).

Positions 4 to 79 constitute a Carrier domain; sequence PEMESRLKKI…DALNYIEQKL (76 aa). Ser39 bears the O-(pantetheine 4'-phosphoryl)serine mark.

It belongs to the acyl carrier protein (ACP) family. 4'-phosphopantetheine is transferred from CoA to a specific serine of apo-ACP by AcpS. This modification is essential for activity because fatty acids are bound in thioester linkage to the sulfhydryl of the prosthetic group.

The protein localises to the cytoplasm. Its pathway is lipid metabolism; fatty acid biosynthesis. Carrier of the growing fatty acid chain in fatty acid biosynthesis. The sequence is that of Acyl carrier protein from Roseiflexus sp. (strain RS-1).